Here is a 262-residue protein sequence, read N- to C-terminus: Sepiapterin reductase (262 aa).

Met1 carries the post-translational modification N-acetylmethionine. 15–21 (GASRGFG) contributes to the NADP(+) binding site. Ser33 carries the phosphoserine modification. 43–44 (RS) lines the NADP(+) pocket. At Ser46 the chain carries Phosphoserine; by CaMK2; in vitro. 70 to 71 (DL) is a binding site for NADP(+). Substrate contacts are provided by residues 158 to 159 (SL) and Tyr171. Lys175 contacts NADP(+). Ser196 is subject to Phosphoserine; by CaMK2; in vitro. Gly200 lines the substrate pocket. 202 to 207 (LDTNMQ) provides a ligand contact to NADP(+). Position 214 is a phosphoserine; by CaMK2; in vitro (Ser214). Asp258 lines the substrate pocket.

It belongs to the sepiapterin reductase family. As to quaternary structure, homodimer. Post-translationally, in vitro phosphorylation of Ser-46, Ser-196 and Ser-214 by CaMK2 does not change kinetic parameters.

It is found in the cytoplasm. It catalyses the reaction L-erythro-7,8-dihydrobiopterin + NADP(+) = L-sepiapterin + NADPH + H(+). The catalysed reaction is (6R)-L-erythro-5,6,7,8-tetrahydrobiopterin + 2 NADP(+) = 6-pyruvoyl-5,6,7,8-tetrahydropterin + 2 NADPH + 2 H(+). Its function is as follows. Catalyzes the final one or two reductions in tetra-hydrobiopterin biosynthesis to form 5,6,7,8-tetrahydrobiopterin. The chain is Sepiapterin reductase (Spr) from Rattus norvegicus (Rat).